The following is an 894-amino-acid chain: Cell wall-associated protease (894 aa).

The N-terminal stretch at 1–31 (MKRRKFSSVVAAVLIFALIFSLFSPGTKAAA) is a signal peptide. The region spanning 422–729 (QWPLKNNGEN…YGRLNVMKAV (308 aa)) is the Peptidase S8 domain. Residues Asp462, His497, and Ser650 each act as charge relay system in the active site.

Belongs to the peptidase S8 family. Proteolytically cleaved to yield CWBP23 and CWBP52.

The protein localises to the secreted. Its subcellular location is the cell wall. With respect to regulation, inhibited by PMSF. Its function is as follows. CWBP52 is a serine-type protease that could be involved in proteoglycan peptide bridges. This chain is Cell wall-associated protease (wprA), found in Bacillus subtilis (strain 168).